Consider the following 339-residue polypeptide: Fructose-1,6-bisphosphatase isozyme 2 (339 aa).

Residues D3 to D10 are important for interaction with ALDOA. AMP-binding positions include V18 and T28 to T32. Mg(2+) contacts are provided by D69 and E98. K113–Y114 is a binding site for AMP. Positions 119, 121, and 122 each coordinate Mg(2+). D122 is a substrate binding site. AMP is bound at residue R141. Residues K204 to K208 carry the Nuclear localization signal motif. N213–Y216 contacts substrate. Residues Y216 and Y219 each carry the phosphotyrosine modification. Residues Y245–M249, Y265, and K275 contribute to the substrate site. E281 serves as a coordination point for Mg(2+).

The protein belongs to the FBPase class 1 family. As to quaternary structure, homotetramer. Interacts with ALDOA; the interaction blocks inhibition by physiological concentrations of AMP and reduces inhibition by Ca(2+). Interacts with alpha-actinin and F-actin. It depends on Mg(2+) as a cofactor.

The protein resides in the cell junction. It localises to the cytoplasm. Its subcellular location is the nucleus. The protein localises to the myofibril. It is found in the sarcomere. The protein resides in the z line. It carries out the reaction beta-D-fructose 1,6-bisphosphate + H2O = beta-D-fructose 6-phosphate + phosphate. It participates in carbohydrate biosynthesis; gluconeogenesis. With respect to regulation, subject to complex allosteric regulation. The enzyme can assume an active R-state, or an inactive T-state. Intermediate conformations may exist. AMP acts as an allosteric inhibitor. Fructose 2,6-bisphosphate acts as a competitive inhibitor. Strongly inhibited by Ca(2+). Catalyzes the hydrolysis of fructose 1,6-bisphosphate to fructose 6-phosphate in the presence of divalent cations and probably participates in glycogen synthesis from carbohydrate precursors, such as lactate. The polypeptide is Fructose-1,6-bisphosphatase isozyme 2 (Fbp2) (Rattus norvegicus (Rat)).